The following is a 63-amino-acid chain: MGAIERSGYTFQPEFSVVRQNGAIHVYHQGEFVEEIEFEFNGEYPDHDLIEELVNHYCFEHEI.

This is an uncharacterized protein from Bacillus subtilis (strain 168).